Here is a 468-residue protein sequence, read N- to C-terminus: ATP synthase subunit beta (468 aa).

155–162 (GGAGVGKT) contributes to the ATP binding site.

Belongs to the ATPase alpha/beta chains family. As to quaternary structure, F-type ATPases have 2 components, CF(1) - the catalytic core - and CF(0) - the membrane proton channel. CF(1) has five subunits: alpha(3), beta(3), gamma(1), delta(1), epsilon(1). CF(0) has three main subunits: a(1), b(2) and c(9-12). The alpha and beta chains form an alternating ring which encloses part of the gamma chain. CF(1) is attached to CF(0) by a central stalk formed by the gamma and epsilon chains, while a peripheral stalk is formed by the delta and b chains.

Its subcellular location is the cell membrane. It catalyses the reaction ATP + H2O + 4 H(+)(in) = ADP + phosphate + 5 H(+)(out). In terms of biological role, produces ATP from ADP in the presence of a proton gradient across the membrane. The catalytic sites are hosted primarily by the beta subunits. This Streptococcus pneumoniae (strain Taiwan19F-14) protein is ATP synthase subunit beta.